The primary structure comprises 261 residues: Putative imidazole glycerol phosphate synthase subunit hisF2 (261 aa).

Asp138 is an active-site residue.

This sequence belongs to the HisA/HisF family. In terms of assembly, heterodimer of HisH and HisF.

It localises to the cytoplasm. The enzyme catalyses 5-[(5-phospho-1-deoxy-D-ribulos-1-ylimino)methylamino]-1-(5-phospho-beta-D-ribosyl)imidazole-4-carboxamide + L-glutamine = D-erythro-1-(imidazol-4-yl)glycerol 3-phosphate + 5-amino-1-(5-phospho-beta-D-ribosyl)imidazole-4-carboxamide + L-glutamate + H(+). The protein operates within amino-acid biosynthesis; L-histidine biosynthesis; L-histidine from 5-phospho-alpha-D-ribose 1-diphosphate: step 5/9. Its function is as follows. IGPS catalyzes the conversion of PRFAR and glutamine to IGP, AICAR and glutamate. The HisF subunit catalyzes the cyclization activity that produces IGP and AICAR from PRFAR using the ammonia provided by the HisH subunit. The polypeptide is Putative imidazole glycerol phosphate synthase subunit hisF2 (hisF2) (Prochlorococcus marinus (strain MIT 9313)).